A 197-amino-acid chain; its full sequence is Glycerol-3-phosphate acyltransferase (197 aa).

Transmembrane regions (helical) follow at residues 1–21 (MTAL…GLLV), 69–89 (LPML…AVVG), 110–130 (VMLF…LVVL), and 152–172 (VFFT…SFIF).

Belongs to the PlsY family. Probably interacts with PlsX.

The protein localises to the cell membrane. It carries out the reaction an acyl phosphate + sn-glycerol 3-phosphate = a 1-acyl-sn-glycero-3-phosphate + phosphate. It functions in the pathway lipid metabolism; phospholipid metabolism. Its function is as follows. Catalyzes the transfer of an acyl group from acyl-phosphate (acyl-PO(4)) to glycerol-3-phosphate (G3P) to form lysophosphatidic acid (LPA). This enzyme utilizes acyl-phosphate as fatty acyl donor, but not acyl-CoA or acyl-ACP. The chain is Glycerol-3-phosphate acyltransferase from Geobacillus kaustophilus (strain HTA426).